Here is a 482-residue protein sequence, read N- to C-terminus: MASIRELHQQLINKERSAVEITTEALERIAAIEPQVKSFLCITADRALETAKAVDQKIAAKEEIGLLAGIPIGIKDNMSTKGIPTTCGSRILENFIPPYESTVTQKLQEIGAVMVGKTNLDEFAMGSSTENSGYQVTANPWDLERVPGGSSGGSAAAVAAEECVVALGSDTGGSIRQPASLCGVVGLKPTYGLVSRFGLVAYGSSLDQIGPFGRTVEDVAIVLGAIAGYDAKDSTSLKLPIPDYTTFLNPSLKGVKIGIIEETFGEGLDSIVAETVNKAIEQLQALGATIERISCPRFRYGLPAYYIIAPSEASANLARYDAVKYGIREEAATLLEMYNKTRAKGFGSEVKRRIMIGTYTLSAGYYDAYYLKAQKVRTLIKQDFDKAFESVDVLVCPTSPTTAFKAGEKTDDPLSMYLSDLMTIPVNLAGLPGMSIPCGFDQQGLPIGLQLVSNVLEEGKLFNVGYAYEQSTEWHKQKPPLK.

Catalysis depends on charge relay system residues Lys-75 and Ser-150. Ser-174 serves as the catalytic Acyl-ester intermediate.

It belongs to the amidase family. GatA subfamily. As to quaternary structure, heterotrimer of A, B and C subunits.

It catalyses the reaction L-glutamyl-tRNA(Gln) + L-glutamine + ATP + H2O = L-glutaminyl-tRNA(Gln) + L-glutamate + ADP + phosphate + H(+). Its function is as follows. Allows the formation of correctly charged Gln-tRNA(Gln) through the transamidation of misacylated Glu-tRNA(Gln) in organisms which lack glutaminyl-tRNA synthetase. The reaction takes place in the presence of glutamine and ATP through an activated gamma-phospho-Glu-tRNA(Gln). This chain is Glutamyl-tRNA(Gln) amidotransferase subunit A, found in Rippkaea orientalis (strain PCC 8801 / RF-1) (Cyanothece sp. (strain PCC 8801)).